The sequence spans 362 residues: 3-isopropylmalate dehydrogenase (362 aa).

78–91 (GPKWESLPPDEQPE) lines the NAD(+) pocket. Residues Arg99, Arg109, Arg138, and Asp227 each contribute to the substrate site. Mg(2+) is bound by residues Asp227, Asp251, and Asp255. 285–297 (GSAPDIAGQGIAN) lines the NAD(+) pocket.

It belongs to the isocitrate and isopropylmalate dehydrogenases family. LeuB type 1 subfamily. As to quaternary structure, homodimer. Mg(2+) is required as a cofactor. Mn(2+) serves as cofactor.

It localises to the cytoplasm. The enzyme catalyses (2R,3S)-3-isopropylmalate + NAD(+) = 4-methyl-2-oxopentanoate + CO2 + NADH. It participates in amino-acid biosynthesis; L-leucine biosynthesis; L-leucine from 3-methyl-2-oxobutanoate: step 3/4. Catalyzes the oxidation of 3-carboxy-2-hydroxy-4-methylpentanoate (3-isopropylmalate) to 3-carboxy-4-methyl-2-oxopentanoate. The product decarboxylates to 4-methyl-2 oxopentanoate. This is 3-isopropylmalate dehydrogenase from Geobacter sulfurreducens (strain ATCC 51573 / DSM 12127 / PCA).